We begin with the raw amino-acid sequence, 122 residues long: Large ribosomal subunit protein bL12 (122 aa).

This sequence belongs to the bacterial ribosomal protein bL12 family. In terms of assembly, homodimer. Part of the ribosomal stalk of the 50S ribosomal subunit. Forms a multimeric L10(L12)X complex, where L10 forms an elongated spine to which 2 to 4 L12 dimers bind in a sequential fashion. Binds GTP-bound translation factors.

Its function is as follows. Forms part of the ribosomal stalk which helps the ribosome interact with GTP-bound translation factors. Is thus essential for accurate translation. The polypeptide is Large ribosomal subunit protein bL12 (Fusobacterium nucleatum subsp. nucleatum (strain ATCC 25586 / DSM 15643 / BCRC 10681 / CIP 101130 / JCM 8532 / KCTC 2640 / LMG 13131 / VPI 4355)).